The following is a 228-amino-acid chain: RNA pyrophosphohydrolase (228 aa).

Residues M1–I70 are unknown. The segment at V71–R228 is rppH domain. Positions G76–T221 constitute a Nudix hydrolase domain. Residues G109–G130 carry the Nudix box motif.

In the C-terminal section; belongs to the Nudix hydrolase family. RppH subfamily. The cofactor is a divalent metal cation.

Accelerates the degradation of transcripts by removing pyrophosphate from the 5'-end of triphosphorylated RNA, leading to a more labile monophosphorylated state that can stimulate subsequent ribonuclease cleavage. This chain is RNA pyrophosphohydrolase, found in Coxiella burnetii (strain RSA 493 / Nine Mile phase I).